A 430-amino-acid polypeptide reads, in one-letter code: 4-hydroxy-3-methylbut-2-en-1-yl diphosphate synthase (flavodoxin) (430 aa).

[4Fe-4S] cluster contacts are provided by cysteine 310, cysteine 313, cysteine 356, and glutamate 363.

Belongs to the IspG family. [4Fe-4S] cluster serves as cofactor.

The enzyme catalyses (2E)-4-hydroxy-3-methylbut-2-enyl diphosphate + oxidized [flavodoxin] + H2O + 2 H(+) = 2-C-methyl-D-erythritol 2,4-cyclic diphosphate + reduced [flavodoxin]. The protein operates within isoprenoid biosynthesis; isopentenyl diphosphate biosynthesis via DXP pathway; isopentenyl diphosphate from 1-deoxy-D-xylulose 5-phosphate: step 5/6. Converts 2C-methyl-D-erythritol 2,4-cyclodiphosphate (ME-2,4cPP) into 1-hydroxy-2-methyl-2-(E)-butenyl 4-diphosphate. The polypeptide is 4-hydroxy-3-methylbut-2-en-1-yl diphosphate synthase (flavodoxin) (Nitrobacter winogradskyi (strain ATCC 25391 / DSM 10237 / CIP 104748 / NCIMB 11846 / Nb-255)).